A 727-amino-acid polypeptide reads, in one-letter code: Adhesion G protein-coupled receptor L4 (727 aa).

The signal sequence occupies residues 1–19 (MKLLLFAAWFSSLLDPCRF). At 20 to 467 (LDICQSCHPN…LAHYNVLTRI (448 aa)) the chain is on the extracellular side. The EGF-like 1; calcium-binding domain occupies 52-90 (DDNECETVPEICGLHANCTNYVGGYYCNCLSGFISNGTE). 6 cysteine pairs are disulfide-bonded: Cys56/Cys69, Cys63/Cys78, Cys106/Cys118, Cys112/Cys127, Cys408/Cys438, and Cys426/Cys440. The EGF-like 2; calcium-binding domain maps to 102–139 (DINECEEDRKCGPNSKCHNNIGSFICSCLRGYTSPAGP). Positions 282-456 (TQMQVHAGDV…AILMSSARAN (175 aa)) constitute a GAIN-B domain. The interval 408 to 456 (CAFWEYSPSMMGHWSLDGCIRTRVNTTHTSCSCNHLTHFAILMSSARAN) is GPS. A helical membrane pass occupies residues 468–488 (TQLGMVISLICLSMCIFTFWF). Residues 489–496 (FRDIQNTR) lie on the Cytoplasmic side of the membrane. A helical transmembrane segment spans residues 497–517 (TTIHKNLCCSLFMAQFIFLIG). Over 518–535 (INKSAHKWFCSLIAGLLH) the chain is Extracellular. The helical transmembrane segment at 536–556 (YFFLAAFAWMCIEGIHLYLIV) threads the bilayer. The Cytoplasmic segment spans residues 557-568 (VGVIYNKGFLHR). Residues 569 to 589 (NFYAFGYGSPAVVVAISATLG) traverse the membrane as a helical segment. Topologically, residues 590–609 (YKYYGTSSVCWLSTENNFIW) are extracellular. The chain crosses the membrane as a helical span at residues 610 to 630 (SFIGPAILIILVNLLAFAVII). Residues 631-654 (YKVYRHTAVKKPEISHYENIRSCA) lie on the Cytoplasmic side of the membrane. The chain crosses the membrane as a helical span at residues 655–675 (RGAIALLFVLGVTWAFGVMYI). Residues 676–682 (LYETTLT) are Extracellular-facing. The helical transmembrane segment at 683-703 (AYLFTFANVFQGMFIFIFLCV) threads the bilayer.

This sequence belongs to the G-protein coupled receptor 2 family. Adhesion G-protein coupled receptor (ADGR) subfamily. Heterodimer of 2 chains generated by proteolytic processing; the large extracellular N-terminal fragment and the membrane-bound C-terminal fragment predominantly remain associated and non-covalently linked. In terms of processing, autoproteolytically processed at the GPS region of the GAIN-B domain; this cleavage modulates receptor activity.

It is found in the cell membrane. Orphan receptor that plays a role in vessel formation. The polypeptide is Adhesion G protein-coupled receptor L4 (Danio rerio (Zebrafish)).